The following is a 312-amino-acid chain: NADH-ubiquinone oxidoreductase chain 1 (312 aa).

A run of 8 helical transmembrane segments spans residues 3–23 (FMEL…LTVA), 37–57 (PNAV…KLLL), 69–89 (FMLI…WAMI), 104–124 (FMLA…AGWA), 141–161 (LISY…LTGT), 173–193 (SMWL…GCVA), 233–253 (MLFY…GLIL), and 279–299 (LIAM…LFMP).

It belongs to the complex I subunit 1 family.

The protein localises to the mitochondrion inner membrane. The enzyme catalyses a ubiquinone + NADH + 5 H(+)(in) = a ubiquinol + NAD(+) + 4 H(+)(out). In terms of biological role, core subunit of the mitochondrial membrane respiratory chain NADH dehydrogenase (Complex I) that is believed to belong to the minimal assembly required for catalysis. Complex I functions in the transfer of electrons from NADH to the respiratory chain. The immediate electron acceptor for the enzyme is believed to be ubiquinone. This Debaryomyces hansenii (strain ATCC 36239 / CBS 767 / BCRC 21394 / JCM 1990 / NBRC 0083 / IGC 2968) (Yeast) protein is NADH-ubiquinone oxidoreductase chain 1 (ND1).